The following is a 492-amino-acid chain: N-succinylglutamate 5-semialdehyde dehydrogenase (492 aa).

Residue 220-225 (GSANTG) coordinates NAD(+). Residues Glu-243 and Cys-277 contribute to the active site.

It belongs to the aldehyde dehydrogenase family. AstD subfamily.

The catalysed reaction is N-succinyl-L-glutamate 5-semialdehyde + NAD(+) + H2O = N-succinyl-L-glutamate + NADH + 2 H(+). Its pathway is amino-acid degradation; L-arginine degradation via AST pathway; L-glutamate and succinate from L-arginine: step 4/5. In terms of biological role, catalyzes the NAD-dependent reduction of succinylglutamate semialdehyde into succinylglutamate. This chain is N-succinylglutamate 5-semialdehyde dehydrogenase, found in Escherichia coli O6:K15:H31 (strain 536 / UPEC).